The chain runs to 411 residues: MDFEIENESEIPQLVDVEEVNTQPHSETLSVPTVSSNNDIDSFEQQSDFLLVDHDSTLDPVPVTILTGFLGAGKTSLLRSILENRNGKRVAVLMNEVGDSGDLERSLMEDVGGEELYEEWVALSNGCMCCTVKDNGIKALEKIMRQKGRFDNIVIETTGIANPGPLAQTFWLDDALKSDVKLDGIVTVIDCKNIDNILKDESDIGFIQISHADCLILNKTDLISSEALSVVRQTILKINCLAKIIETTYGRLDDISEILDLDAYGNENTSNLEWSIQRSNDSNINCSTCLDVDCQHLHSLDTHSLDISTHTFKLPPLMSKEVFQQFLQWVRHTLWSCLEEGEDEEFMIYRSKGIFNKDDGSWYIFQGVREVFEIMPLSEKPRAFLEKDIHPEIILIGRNLHRISPFVVGNQ.

A psi-PxLVp motif motif is present at residues 9–16; it reads SEIPQLVD. 68 to 75 provides a ligand contact to GTP; sequence GFLGAGKT. 3 residues coordinate Zn(2+): cysteine 127, cysteine 129, and cysteine 130. The CXCC motif motif lies at 127–130; it reads CMCC. GTP contacts are provided by residues 130–134 and 218–221; these read CTVKD and NKTD. The 105-residue stretch at 307 to 411 folds into the CobW C-terminal domain; it reads ISTHTFKLPP…RISPFVVGNQ (105 aa).

The protein belongs to the SIMIBI class G3E GTPase family. ZNG1 subfamily.

The catalysed reaction is GTP + H2O = GDP + phosphate + H(+). Its function is as follows. Zinc chaperone that directly transfers zinc cofactor to target metalloproteins, thereby activating them. Catalyzes zinc insertion into the active site of methionine aminopeptidase map1, which function to cleave the initiator methionine from polypeptides during or after protein translation. Mechanistically, the N-terminal psi-PxLVp motif binds to the C6H2-type zinc finger of inactive form of map1. After formation of the docked complex, zinc is transferred from the CXCC motif in the GTPase domain of zng1 to the zinc binding site in the peptidase domain of map1 in a process requiring GTP hydrolysis. GTP/GDP exchange is required for release of active map1. The chain is Zinc-regulated GTPase metalloprotein activator 1 (zng1) from Schizosaccharomyces pombe (strain 972 / ATCC 24843) (Fission yeast).